Reading from the N-terminus, the 145-residue chain is D-aminoacyl-tRNA deacylase (145 aa).

The Gly-cisPro motif, important for rejection of L-amino acids motif lies at Gly-137–Pro-138.

This sequence belongs to the DTD family. Homodimer.

The protein localises to the cytoplasm. It carries out the reaction glycyl-tRNA(Ala) + H2O = tRNA(Ala) + glycine + H(+). It catalyses the reaction a D-aminoacyl-tRNA + H2O = a tRNA + a D-alpha-amino acid + H(+). An aminoacyl-tRNA editing enzyme that deacylates mischarged D-aminoacyl-tRNAs. Also deacylates mischarged glycyl-tRNA(Ala), protecting cells against glycine mischarging by AlaRS. Acts via tRNA-based rather than protein-based catalysis; rejects L-amino acids rather than detecting D-amino acids in the active site. By recycling D-aminoacyl-tRNA to D-amino acids and free tRNA molecules, this enzyme counteracts the toxicity associated with the formation of D-aminoacyl-tRNA entities in vivo and helps enforce protein L-homochirality. The polypeptide is D-aminoacyl-tRNA deacylase (Salmonella paratyphi C (strain RKS4594)).